A 182-amino-acid chain; its full sequence is Large ribosomal subunit protein bL17 (182 aa).

The segment at 126-182 is disordered; that stretch reads ERANRVAASKAKKAEAEAAEAKAEEAEEAPEVEADTATDKAAEAEAAEAADEAAEDK. Residues 137–149 are compositionally biased toward basic and acidic residues; the sequence is KKAEAEAAEAKAE. Composition is skewed to acidic residues over residues 150–161 and 170–182; these read EAEEAPEVEADT and EAAEAADEAAEDK.

The protein belongs to the bacterial ribosomal protein bL17 family. As to quaternary structure, part of the 50S ribosomal subunit. Contacts protein L32.

This is Large ribosomal subunit protein bL17 from Corynebacterium jeikeium (strain K411).